Here is a 148-residue protein sequence, read N- to C-terminus: Sec-independent protein translocase protein TatB (148 aa).

A helical membrane pass occupies residues 2–22 (FNDIGPLELVTLVVLAVLVFG). 2 stretches are compositionally biased toward basic and acidic residues: residues 100-110 (VTDAVHGRESE) and 128-148 (MTKKREQLEADERPPFDADAT). The segment at 100 to 148 (VTDAVHGRESETSASSSSANGSAGGTVDMTKKREQLEADERPPFDADAT) is disordered.

Belongs to the TatB family. In terms of assembly, the Tat system comprises two distinct complexes: a TatABC complex, containing multiple copies of TatA, TatB and TatC subunits, and a separate TatA complex, containing only TatA subunits. Substrates initially bind to the TatABC complex, which probably triggers association of the separate TatA complex to form the active translocon.

It localises to the cell membrane. Functionally, part of the twin-arginine translocation (Tat) system that transports large folded proteins containing a characteristic twin-arginine motif in their signal peptide across membranes. Together with TatC, TatB is part of a receptor directly interacting with Tat signal peptides. TatB may form an oligomeric binding site that transiently accommodates folded Tat precursor proteins before their translocation. The polypeptide is Sec-independent protein translocase protein TatB (Streptomyces avermitilis (strain ATCC 31267 / DSM 46492 / JCM 5070 / NBRC 14893 / NCIMB 12804 / NRRL 8165 / MA-4680)).